The chain runs to 484 residues: Probable glycine dehydrogenase (decarboxylating) subunit 2 (484 aa).

K264 carries the N6-(pyridoxal phosphate)lysine modification.

It belongs to the GcvP family. C-terminal subunit subfamily. As to quaternary structure, the glycine cleavage system is composed of four proteins: P, T, L and H. In this organism, the P 'protein' is a heterodimer of two subunits. Requires pyridoxal 5'-phosphate as cofactor.

The catalysed reaction is N(6)-[(R)-lipoyl]-L-lysyl-[glycine-cleavage complex H protein] + glycine + H(+) = N(6)-[(R)-S(8)-aminomethyldihydrolipoyl]-L-lysyl-[glycine-cleavage complex H protein] + CO2. Its function is as follows. The glycine cleavage system catalyzes the degradation of glycine. The P protein binds the alpha-amino group of glycine through its pyridoxal phosphate cofactor; CO(2) is released and the remaining methylamine moiety is then transferred to the lipoamide cofactor of the H protein. This chain is Probable glycine dehydrogenase (decarboxylating) subunit 2, found in Legionella pneumophila (strain Lens).